The primary structure comprises 715 residues: Transcription factor MST12 (715 aa).

Residues 214-224 (SSSFNAQQVSF) are compositionally biased toward low complexity. Disordered stretches follow at residues 214–243 (SSSF…MPPP), 439–469 (AAHR…NSPP), and 518–539 (PMPS…AQGG). 2 consecutive C2H2-type zinc fingers follow at residues 564–588 (HSCP…VRTH) and 594–616 (YICP…KRTH). Residues 632–691 (EEEYSGDDHLGSLEEASPTSEGGYVTSSLNSAMAHSNTSQHPGSNAVSPNPGPMSHAPTY) are disordered. The span at 648–679 (SPTSEGGYVTSSLNSAMAHSNTSQHPGSNAVS) shows a compositional bias: polar residues.

Belongs to the STE12 transcription factor family.

It localises to the nucleus. In terms of biological role, transcription factor that may function downstream of PMK1 to regulate genes involved in infectious hyphae growth. Is not essential for vegetative growth, conidiation or appressorium formation. May be involved in the regulation of the expression of the cell surface sensor MSB2. This chain is Transcription factor MST12, found in Pyricularia oryzae (strain 70-15 / ATCC MYA-4617 / FGSC 8958) (Rice blast fungus).